The chain runs to 437 residues: Trigger factor (437 aa).

One can recognise a PPIase FKBP-type domain in the interval D161–P246.

The protein belongs to the FKBP-type PPIase family. Tig subfamily.

It localises to the cytoplasm. The catalysed reaction is [protein]-peptidylproline (omega=180) = [protein]-peptidylproline (omega=0). In terms of biological role, involved in protein export. Acts as a chaperone by maintaining the newly synthesized protein in an open conformation. Functions as a peptidyl-prolyl cis-trans isomerase. This is Trigger factor from Pseudomonas putida (strain ATCC 47054 / DSM 6125 / CFBP 8728 / NCIMB 11950 / KT2440).